The sequence spans 547 residues: Chaperonin GroEL (547 aa).

Residues 30 to 33, Lys-51, 87 to 91, Gly-415, and Asp-495 contribute to the ATP site; these read TLGP and DGTTT.

This sequence belongs to the chaperonin (HSP60) family. Forms a cylinder of 14 subunits composed of two heptameric rings stacked back-to-back. Interacts with the co-chaperonin GroES.

It localises to the cytoplasm. It catalyses the reaction ATP + H2O + a folded polypeptide = ADP + phosphate + an unfolded polypeptide.. Its function is as follows. Together with its co-chaperonin GroES, plays an essential role in assisting protein folding. The GroEL-GroES system forms a nano-cage that allows encapsulation of the non-native substrate proteins and provides a physical environment optimized to promote and accelerate protein folding. This Rhizobium leguminosarum bv. trifolii (strain WSM2304) protein is Chaperonin GroEL.